The following is a 92-amino-acid chain: Small ribosomal subunit protein uS19 (92 aa).

It belongs to the universal ribosomal protein uS19 family.

In terms of biological role, protein S19 forms a complex with S13 that binds strongly to the 16S ribosomal RNA. The sequence is that of Small ribosomal subunit protein uS19 from Paramagnetospirillum magneticum (strain ATCC 700264 / AMB-1) (Magnetospirillum magneticum).